The following is a 292-amino-acid chain: Brix domain-containing protein ZK795.3 (292 aa).

The region spanning 78-259 is the Brix domain; it reads PKIVITTSRD…PYQIKLGTLE (182 aa).

This chain is Brix domain-containing protein ZK795.3, found in Caenorhabditis elegans.